The following is a 182-amino-acid chain: Large ribosomal subunit protein uL5 (182 aa).

This sequence belongs to the universal ribosomal protein uL5 family. In terms of assembly, part of the 50S ribosomal subunit; part of the 5S rRNA/L5/L18/L25 subcomplex. Contacts the 5S rRNA and the P site tRNA. Forms a bridge to the 30S subunit in the 70S ribosome.

In terms of biological role, this is one of the proteins that bind and probably mediate the attachment of the 5S RNA into the large ribosomal subunit, where it forms part of the central protuberance. In the 70S ribosome it contacts protein S13 of the 30S subunit (bridge B1b), connecting the 2 subunits; this bridge is implicated in subunit movement. Contacts the P site tRNA; the 5S rRNA and some of its associated proteins might help stabilize positioning of ribosome-bound tRNAs. The polypeptide is Large ribosomal subunit protein uL5 (Acidobacterium capsulatum (strain ATCC 51196 / DSM 11244 / BCRC 80197 / JCM 7670 / NBRC 15755 / NCIMB 13165 / 161)).